Consider the following 155-residue polypeptide: Large ribosomal subunit protein uL16 (155 aa).

A disordered region spans residues 1–22; that stretch reads MLSPKRTKYRKQQRGRMKGKAT.

This sequence belongs to the universal ribosomal protein uL16 family. As to quaternary structure, part of the 50S ribosomal subunit.

Functionally, binds 23S rRNA and is also seen to make contacts with the A and possibly P site tRNAs. This Synechococcus sp. (strain JA-2-3B'a(2-13)) (Cyanobacteria bacterium Yellowstone B-Prime) protein is Large ribosomal subunit protein uL16.